The primary structure comprises 188 residues: CyanoP (188 aa).

Residues 1 to 23 (MLKKSLSTAVVLVTLLLSFTLTA) form the signal peptide. Cysteine 24 carries the N-palmitoyl cysteine lipid modification. Residue cysteine 24 is the site of S-diacylglycerol cysteine attachment.

The protein belongs to the PsbP family. CyanoP subfamily. In terms of assembly, monomer. Present in about 3% of photosystem II (PSII) preparations. Purifies with partially assembled PSII complexes, in addition to a small amount of monomeric and dimeric PSII, and trimeric PSI.

The protein localises to the cellular thylakoid membrane. In terms of biological role, plays a role in the early stages of photosystem II (PSII) assembly; binds to D2 (psbD) and may facilitate its incorporation into PSII. Required for optimal photoautotrophic growth in the absence of Ca(2+) or Cl(-), functions in optimizing PSII water oxidation/O(2) evolving activity. Might be involved in assembly of the oxygen evolving complex. The sequence is that of CyanoP from Synechocystis sp. (strain ATCC 27184 / PCC 6803 / Kazusa).